Reading from the N-terminus, the 160-residue chain is Transcriptional repressor NrdR (160 aa).

Polar residues predominate over residues 1–11 (MRCPNCNSLDT). The segment at 1–20 (MRCPNCNSLDTQVKDSRPTE) is disordered. The segment at 3–34 (CPNCNSLDTQVKDSRPTEDSSVIRRRRVCVAC) is a zinc-finger region. The region spanning 49-139 (LTVIKRNGRR…VYRNFREAKD (91 aa)) is the ATP-cone domain.

The protein belongs to the NrdR family. The cofactor is Zn(2+).

In terms of biological role, negatively regulates transcription of bacterial ribonucleotide reductase nrd genes and operons by binding to NrdR-boxes. The polypeptide is Transcriptional repressor NrdR (Bradyrhizobium diazoefficiens (strain JCM 10833 / BCRC 13528 / IAM 13628 / NBRC 14792 / USDA 110)).